A 391-amino-acid chain; its full sequence is Glycosyltransferase afumC (391 aa).

This sequence belongs to the afumC glycosyltransferase family.

It functions in the pathway secondary metabolite biosynthesis. With respect to regulation, activity is significantly decreased by addition of divalent cations such as Mg(2+), Mn(2+), Zn(2+), Ca(2+), Co(2+), Cu(2+), and Ni(2+); while Fe(2+) has little effect. Glycosyltransferase; part of the gene cluster that mediates the biosynthesis fumihopaside A, a hopane-type glucoside that enhances the thermotolerance and UV resistance of N.fumigata. The first step of fumihopaside A biosynthesis is performed by the squalene hopane cyclase afumA that catalyzes the cyclization of 3S-oxidosqualene into the hopene 21-beta-H-hopane-3-beta,22-diol. The cytochrome P450 monooxygenase afumB is responsible for both hydroxylation at C-24 and oxidations at C-30 of the afumA product. The glycosyltransferase afumC then catalyzes the glycosylation at C-24, using UDP-D-glucose as a donor, to produce fumihopaside A. AfumC is also able to accept UDP-D-galactose and UDP-D-glucuronic acid as donors to yield minor derivatives. Fumihopaside B, another minor derivative produced, is different from fumihopaside A due to the presence of a double bond between C-22 and C-29. The chain is Glycosyltransferase afumC from Aspergillus fumigatus (strain CBS 144.89 / FGSC A1163 / CEA10) (Neosartorya fumigata).